The sequence spans 401 residues: Ascaroside receptor GPR3 (401 aa).

Topologically, residues 1–16 (MQPFGDAWSQRHLAGV) are extracellular. Residues 17–37 (VLAGSVLSIVGSLYMILGFFF) form a helical membrane-spanning segment. Residues 38 to 47 (LRECRSFRHK) are Cytoplasmic-facing. Residues 48 to 68 (LILGLAVSDLLLALNFFIPSL) traverse the membrane as a helical segment. The Extracellular portion of the chain corresponds to 69–93 (SMVTGREISSPWNEGFCSANGFLMQ). Cys-85 and Cys-159 are disulfide-bonded. A helical transmembrane segment spans residues 94–114 (LFFAQIDVWQISIALITLLML). Topologically, residues 115–128 (SGPSMVLKWIRENV) are cytoplasmic. The helical transmembrane segment at 129-149 (WAVWLFPWLVSLIAAFFAFGF) threads the bilayer. Topologically, residues 150–175 (WDYANVGGFCWLGSRNIRLYFNYIPR) are extracellular. Residues 176-196 (WIIILVCLVIYIAVYRLILHA) traverse the membrane as a helical segment. The Cytoplasmic portion of the chain corresponds to 197–294 (RRRANIQKTY…QKQVRKIAIQ (98 aa)). Residues 206 to 259 (YRGRASDRAPPQPVTTTAPATNPESEKVNPDEISSGNGSSSLDTSRSGSSTGFT) form a disordered region. Residues 239–257 (SSGNGSSSLDTSRSGSSTG) are compositionally biased toward low complexity. The helical transmembrane segment at 295–315 (MISYPLAYAVLWAIPTIVMII) threads the bilayer. The Extracellular segment spans residues 316 to 321 (QVARGG). The helical transmembrane segment at 322–342 (EGVSIHVEGLAKMLLVFNGFV) threads the bilayer. The Cytoplasmic portion of the chain corresponds to 343–401 (DAHVYGFNERTAMGWRQRIRPAAQEDDEEAAGTSGGVHEVVSRPEPTLKNPNVWQQNMV). The tract at residues 362 to 401 (RPAAQEDDEEAAGTSGGVHEVVSRPEPTLKNPNVWQQNMV) is disordered. Over residues 391–401 (KNPNVWQQNMV) the composition is skewed to polar residues.

Belongs to the G-protein coupled receptor 1 family. Interacts with ascaroside receptor GPR2; may form a functional heterodimer. Interacts with guanine nucleotide-binding protein alpha GPA2; to activate adenylate cyclase and positively regulate nematode trap formation.

The protein resides in the cell membrane. Functionally, g protein-coupled receptor that senses nematode ascaroside pheromones and signals via adenylate cyclase to positively regulate trap formation for nematode capture. The chain is Ascaroside receptor GPR3 from Arthrobotrys oligospora (strain ATCC 24927 / CBS 115.81 / DSM 1491) (Nematode-trapping fungus).